The chain runs to 209 residues: Protein-L-isoaspartate O-methyltransferase (209 aa).

S59 is an active-site residue.

It belongs to the methyltransferase superfamily. L-isoaspartyl/D-aspartyl protein methyltransferase family.

The protein resides in the cytoplasm. The enzyme catalyses [protein]-L-isoaspartate + S-adenosyl-L-methionine = [protein]-L-isoaspartate alpha-methyl ester + S-adenosyl-L-homocysteine. Its function is as follows. Catalyzes the methyl esterification of L-isoaspartyl residues in peptides and proteins that result from spontaneous decomposition of normal L-aspartyl and L-asparaginyl residues. It plays a role in the repair and/or degradation of damaged proteins. The sequence is that of Protein-L-isoaspartate O-methyltransferase from Helicobacter pylori (strain G27).